The sequence spans 791 residues: Probable potassium transporter 11 (791 aa).

Residues 1 to 49 (MASLSESEGTNRGSMWELDQNLDQPMDEEASRLKNMYREKKFSSLLLLR) lie on the Cytoplasmic side of the membrane. The helical transmembrane segment at 50–70 (LAFQSLGVVFGDLGTSPLYVF) threads the bilayer. Over 71–87 (YNAFPHGVDDEEDVIGA) the chain is Extracellular. A helical membrane pass occupies residues 88–108 (LSLIIYTLTLIPLLKYVFVVL). The Cytoplasmic segment spans residues 109-175 (RANDNGQGGT…EAHAYKRNCL (67 aa)). A helical transmembrane segment spans residues 176-196 (LIVVLIGTCTAIGDGILTPAI). The Extracellular segment spans residues 197-215 (SVLSASGGIKVQNPNMSTD). A glycan (N-linked (GlcNAc...) asparagine) is linked at asparagine 211. Residues 216–236 (VVVIVSVIILIGLFSMQHYGT) form a helical membrane-spanning segment. The Cytoplasmic portion of the chain corresponds to 237 to 238 (DK). The helical transmembrane segment at 239 to 259 (VGWLFAPIVLLWFILIGSVGA) threads the bilayer. The Extracellular segment spans residues 260 to 289 (LNIHKYKGSVLKAYNPVYIYRYFQRRNSDS). A helical membrane pass occupies residues 290-310 (WASLGGIMLSITGTEALFADL). Topologically, residues 311–315 (CHFPV) are cytoplasmic. Residues 316–338 (FAIQIAFTLIVFPCLLLAYTGQA) traverse the membrane as a helical segment. Topologically, residues 339–359 (AYIIAHKDHVADAFYRSIPDS) are extracellular. The chain crosses the membrane as a helical span at residues 360 to 380 (IYWPAFVIATAAAIVASQATI). At 381 to 411 (SATYSIIKQALALGCFPRVKIVHTSKKFLGQ) the chain is on the cytoplasmic side. The chain crosses the membrane as a helical span at residues 412–432 (IYIPDINWVLLILCIAVTAGF). Residues 433–444 (KNQSQIGNAYGT) lie on the Extracellular side of the membrane. Residue asparagine 434 is glycosylated (N-linked (GlcNAc...) asparagine). Residues 445 to 465 (AVVIVMLVTTFLMVPIMLLVW) form a helical membrane-spanning segment. Topologically, residues 466–468 (KSH) are cytoplasmic. A helical membrane pass occupies residues 469 to 489 (WILVVTFIVLSLMVEIPYFSA). The Extracellular segment spans residues 490–496 (CLLKIDQ). Residues 497 to 517 (GGWVPLVIATAFFIIMYVWHF) form a helical membrane-spanning segment. Residues 518–791 (CTVKRYEFEM…LLNVGQIYYI (274 aa)) lie on the Cytoplasmic side of the membrane.

Belongs to the HAK/KUP transporter (TC 2.A.72.3) family.

It localises to the membrane. Functionally, high-affinity potassium transporter. The protein is Probable potassium transporter 11 of Oryza sativa subsp. japonica (Rice).